Reading from the N-terminus, the 455-residue chain is Angiopoietin-related protein 3 (455 aa).

Positions 1–16 (MHTIKLFLFVVPLVIA) are cleaved as a signal peptide. Positions 17 to 165 (SRVDPDLSSF…QEHPEVTSLK (149 aa)) are sufficient to inhibit LPL lipase activity. The segment at 17 to 207 (SRVDPDLSSF…EIEKQLRKTG (191 aa)) is sufficient to inhibit LIPG/EL phospholipase activity. Residues 32-56 (EPKSRFAMLDDVKILANGLLQLGHG) form a required for inhibition of LPL lipase activity region. A coiled-coil region spans residues 85 to 206 (LSLRTNEIKE…KEIEKQLRKT (122 aa)). N-linked (GlcNAc...) asparagine glycosylation is present at Asn-115. A disordered region spans residues 202–242 (QLRKTGIQEPSENSLSSKSRAPRTTPPLQLNETENTEQDDL). The segment covering 209 to 220 (QEPSENSLSSKS) has biased composition (polar residues). O-linked (GlcNAc) threonine glycosylation is present at Thr-226. A glycan (N-linked (GlcNAc...) asparagine) is linked at Asn-232. The Fibrinogen C-terminal domain maps to 237 to 455 (TEQDDLPADC…SSKMMLQPTT (219 aa)). A disulfide bridge links Cys-246 with Cys-274. Asn-296 and Asn-357 each carry an N-linked (GlcNAc...) asparagine glycan. The cysteines at positions 394 and 408 are disulfide-linked.

As to quaternary structure, interacts with ANGPTL8. Interacts with ITGB3. In part proteolytically cleaved by proprotein convertases; proposed to be involved in activation. In primary hepatocytes is intracellularily predominantly processed by FURIN and extracellularily by FURIN and PCSK6/PACE4. In 18.5 dpc embryos 75% of protein is found to be processed compared to 25 % in adults. As to expression, predominantly expressed in liver, weakly expressed in kidney and lung. Expressed in podocytes (at protein level). Expressed in hypothalamic neurons (at protein level). Expressed in bone marrow sinusoidal endothelial cells (at protein level).

The protein resides in the secreted. The protein localises to the cell projection. Its subcellular location is the lamellipodium. Its function is as follows. Acts in part as a hepatokine that is involved in regulation of lipid and glucose metabolism. Proposed to play a role in the trafficking of energy substrates to either storage or oxidative tissues in response to food intake. Has a stimulatory effect on plasma triglycerides (TG), which is achieved by suppressing plasma TG clearance via inhibition of LPL activity; the function seems to be specific for the feeding conditions. The inhibition of LPL activity appears to be an indirect mechanism involving recruitment of proprotein convertases PCSK6 and FURIN to LPL leading to cleavage and dissociation of LPL from the cell surface; the function does not require ANGPTL3 proteolytic cleavage but seems to be mediated by the N-terminal domain, and is not inhibited by GPIHBP1. Can inhibit endothelial lipase, causing increased plasma levels of high density lipoprotein (HDL) cholesterol and phospholipids; the cleaved N-terminal domain is more efficient than the uncleaved proprotein. Can bind to adipocytes to activate lipolysis, releasing free fatty acids and glycerol. Suppresses LPL specifically in oxidative tissues which is required to route very low density lipoprotein (VLDL)-TG to white adipose tissue (WAT) for storage in response to food; the function may involve cooperation with circulating, liver-derived ANGPTL8 and ANGPTL4 expression in WAT. Contributes to lower plasma levels of low density lipoprotein (LDL)-cholesterol by a mechanism that is independent of the canonical pathway implicating APOE and LDLR. May stimulate hypothalamic LPL activity. In terms of biological role, involved in angiogenesis. Binds to endothelial cells via integrin alpha-V/beta-3 (ITGAV:ITGB3), activates FAK, MAPK and Akt signaling pathways and induces cell adhesion and cell migration. May increase the motility of podocytes. Secreted from podocytes, may modulate properties of glomerular endothelial cells involving integrin alpha-V/beta-3 and Akt signaling. May induce actin filament rearrangements in podocytes implicating integrin alpha-V/beta-3 and Rac1 activation. Binds to hematopoietic stem cells (HSC) and is involved in the regulation of HSC activity probably implicating down-regulation of IKZF1/IKAROS. The chain is Angiopoietin-related protein 3 (Angptl3) from Mus musculus (Mouse).